We begin with the raw amino-acid sequence, 227 residues long: NADH-quinone oxidoreductase subunit C (227 aa).

It belongs to the complex I 30 kDa subunit family. In terms of assembly, NDH-1 is composed of 14 different subunits. Subunits NuoB, C, D, E, F, and G constitute the peripheral sector of the complex.

The protein resides in the cell inner membrane. The enzyme catalyses a quinone + NADH + 5 H(+)(in) = a quinol + NAD(+) + 4 H(+)(out). In terms of biological role, NDH-1 shuttles electrons from NADH, via FMN and iron-sulfur (Fe-S) centers, to quinones in the respiratory chain. The immediate electron acceptor for the enzyme in this species is believed to be ubiquinone. Couples the redox reaction to proton translocation (for every two electrons transferred, four hydrogen ions are translocated across the cytoplasmic membrane), and thus conserves the redox energy in a proton gradient. The chain is NADH-quinone oxidoreductase subunit C from Legionella pneumophila (strain Lens).